The following is a 215-amino-acid chain: LysM and putative peptidoglycan-binding domain-containing protein 1 (215 aa).

The LysM domain occupies 37–81 (LEHQVQPGDTLQGLALRYGVSMEQIKRANRLYTNDSIFLKKSLYI). Composition is skewed to polar residues over residues 86–103 (GQSDLSDDQNSQEGSETE) and 173–189 (GNRTPSRQNSPQTQQRS). 2 disordered regions span residues 86–133 (GQSD…PVDF) and 148–203 (AVKK…TRAS).

The polypeptide is LysM and putative peptidoglycan-binding domain-containing protein 1 (lysmd1) (Xenopus laevis (African clawed frog)).